Reading from the N-terminus, the 449-residue chain is Metacaspase-1 (449 aa).

The interval M1 to S132 is disordered. The segment covering Y10–P26 has biased composition (low complexity). Residues P27–Q55 are compositionally biased toward pro residues. Positions N56–T66 are enriched in polar residues. Composition is skewed to low complexity over residues Q67–P91 and Q98–P112. Positions G119–S132 are enriched in polar residues. Catalysis depends on residues H232 and C293.

It belongs to the peptidase C14B family.

Functionally, involved in cell death (apoptosis). The chain is Metacaspase-1 (MCA1) from Lodderomyces elongisporus (strain ATCC 11503 / CBS 2605 / JCM 1781 / NBRC 1676 / NRRL YB-4239) (Yeast).